The primary structure comprises 246 residues: 3'(2'),5'-bisphosphate nucleotidase CysQ (246 aa).

5 residues coordinate Mg(2+): Glu64, Asp83, Leu85, Asp86, and Asp205. Glu64 is a binding site for substrate. Residues Leu85 to Thr88 and Asp205 each bind substrate.

The protein belongs to the inositol monophosphatase superfamily. CysQ family. Mg(2+) serves as cofactor.

It is found in the cell inner membrane. It carries out the reaction adenosine 3',5'-bisphosphate + H2O = AMP + phosphate. In terms of biological role, converts adenosine-3',5'-bisphosphate (PAP) to AMP. The protein is 3'(2'),5'-bisphosphate nucleotidase CysQ of Escherichia coli O157:H7.